The primary structure comprises 185 residues: ATP-dependent protease subunit HslV (185 aa).

Thr12 is an active-site residue. The Na(+) site is built by Ala168, Cys171, and Thr174.

This sequence belongs to the peptidase T1B family. HslV subfamily. A double ring-shaped homohexamer of HslV is capped on each side by a ring-shaped HslU homohexamer. The assembly of the HslU/HslV complex is dependent on binding of ATP.

The protein resides in the cytoplasm. The enzyme catalyses ATP-dependent cleavage of peptide bonds with broad specificity.. Its activity is regulated as follows. Allosterically activated by HslU binding. Its function is as follows. Protease subunit of a proteasome-like degradation complex believed to be a general protein degrading machinery. The chain is ATP-dependent protease subunit HslV from Cereibacter sphaeroides (strain ATCC 17025 / ATH 2.4.3) (Rhodobacter sphaeroides).